Here is a 253-residue protein sequence, read N- to C-terminus: Imidazole glycerol phosphate synthase subunit HisF (253 aa).

Active-site residues include aspartate 11 and aspartate 130.

This sequence belongs to the HisA/HisF family. Heterodimer of HisH and HisF.

The protein localises to the cytoplasm. It catalyses the reaction 5-[(5-phospho-1-deoxy-D-ribulos-1-ylimino)methylamino]-1-(5-phospho-beta-D-ribosyl)imidazole-4-carboxamide + L-glutamine = D-erythro-1-(imidazol-4-yl)glycerol 3-phosphate + 5-amino-1-(5-phospho-beta-D-ribosyl)imidazole-4-carboxamide + L-glutamate + H(+). It functions in the pathway amino-acid biosynthesis; L-histidine biosynthesis; L-histidine from 5-phospho-alpha-D-ribose 1-diphosphate: step 5/9. Functionally, IGPS catalyzes the conversion of PRFAR and glutamine to IGP, AICAR and glutamate. The HisF subunit catalyzes the cyclization activity that produces IGP and AICAR from PRFAR using the ammonia provided by the HisH subunit. This Geotalea daltonii (strain DSM 22248 / JCM 15807 / FRC-32) (Geobacter daltonii) protein is Imidazole glycerol phosphate synthase subunit HisF.